Here is a 291-residue protein sequence, read N- to C-terminus: tRNA U34 carboxymethyltransferase (291 aa).

Residues lysine 61, tryptophan 75, lysine 80, glycine 100, 122–124 (DPS), 149–150 (VE), tyrosine 169, and arginine 284 contribute to the carboxy-S-adenosyl-L-methionine site.

Belongs to the class I-like SAM-binding methyltransferase superfamily. CmoB family. As to quaternary structure, homotetramer.

It carries out the reaction carboxy-S-adenosyl-L-methionine + 5-hydroxyuridine(34) in tRNA = 5-carboxymethoxyuridine(34) in tRNA + S-adenosyl-L-homocysteine + H(+). Functionally, catalyzes carboxymethyl transfer from carboxy-S-adenosyl-L-methionine (Cx-SAM) to 5-hydroxyuridine (ho5U) to form 5-carboxymethoxyuridine (cmo5U) at position 34 in tRNAs. This chain is tRNA U34 carboxymethyltransferase, found in Campylobacter jejuni subsp. jejuni serotype O:23/36 (strain 81-176).